The following is a 947-amino-acid chain: Altered inheritance of mitochondria protein 3 (947 aa).

Disordered regions lie at residues 1-334 (MGFW…LLPQ), 354-810 (MSST…QDEV), and 824-904 (RKTN…KSLE). The span at 36–54 (ASKKHYNNSKARRERKSGK) shows a compositional bias: basic residues. A phosphoserine mark is found at serine 57, serine 58, and serine 64. Acidic residues predominate over residues 59 to 69 (DEEYDSEDEME). Positions 70-84 (YERKPTDIRSLKDPK) are enriched in basic and acidic residues. 2 stretches are compositionally biased toward low complexity: residues 93–105 (PGQKTYTGQQQQQ) and 130–163 (QSQYAQPQYNQYPQQQLQQGVMPQQQQLQQGVVP). Polar residues predominate over residues 177-255 (GSNSNATSYQ…YVSHGSTNLG (79 aa)). 2 stretches are compositionally biased toward low complexity: residues 256–289 (QSQFPSGQQQQPTTQFGQQVLPSPAQPQQQQQGQ) and 313–334 (QQQQQQQQQQQPLNQNNALLPQ). Residues 354-367 (MSSTTNMQDSNPSY) are compositionally biased toward polar residues. Residues 379 to 395 (GGQPPVPVRMQPQPPQP) are compositionally biased toward pro residues. Residues 466–475 (IQPNTTSSAA) show a composition bias toward polar residues. The residue at position 476 (serine 476) is a Phosphoserine. Residues 488–502 (DNERNSGNKENDEST) are compositionally biased toward basic and acidic residues. Residues 633-644 (VPQSKPQSQSQF) show a composition bias toward polar residues. The span at 667–676 (SQSSNSSDSS) shows a compositional bias: low complexity. Threonine 729 is subject to Phosphothreonine. The segment covering 749 to 759 (DSSKDANKYEK) has biased composition (basic and acidic residues). Over residues 763-774 (PVTSSIQAQQST) the composition is skewed to polar residues. Threonine 861 is modified (phosphothreonine). A compositionally biased stretch (pro residues) spans 862 to 879 (PPRPPPSRSSPKKVPPVV). The segment covering 888–899 (KKPPVVPKKKPL) has biased composition (basic residues).

It belongs to the AIM3 family. As to quaternary structure, interacts with RVS167.

It is found in the membrane raft. The polypeptide is Altered inheritance of mitochondria protein 3 (AIM3) (Saccharomyces cerevisiae (strain ATCC 204508 / S288c) (Baker's yeast)).